A 212-amino-acid chain; its full sequence is Pyridoxine/pyridoxamine 5'-phosphate oxidase (212 aa).

Residues 61-66, 76-77, Lys-83, and Gln-105 each bind FMN; these read RSVLLK and YT. Residue Lys-66 participates in substrate binding. Positions 123, 127, and 131 each coordinate substrate. FMN is bound by residues 140–141 and Trp-185; that span reads QS. 191–193 is a binding site for substrate; sequence RLH. Position 195 (Arg-195) interacts with FMN.

This sequence belongs to the pyridoxamine 5'-phosphate oxidase family. Homodimer. FMN serves as cofactor.

The catalysed reaction is pyridoxamine 5'-phosphate + O2 + H2O = pyridoxal 5'-phosphate + H2O2 + NH4(+). It carries out the reaction pyridoxine 5'-phosphate + O2 = pyridoxal 5'-phosphate + H2O2. It functions in the pathway cofactor metabolism; pyridoxal 5'-phosphate salvage; pyridoxal 5'-phosphate from pyridoxamine 5'-phosphate: step 1/1. It participates in cofactor metabolism; pyridoxal 5'-phosphate salvage; pyridoxal 5'-phosphate from pyridoxine 5'-phosphate: step 1/1. In terms of biological role, catalyzes the oxidation of either pyridoxine 5'-phosphate (PNP) or pyridoxamine 5'-phosphate (PMP) into pyridoxal 5'-phosphate (PLP). The protein is Pyridoxine/pyridoxamine 5'-phosphate oxidase of Dichelobacter nodosus (strain VCS1703A).